A 108-amino-acid polypeptide reads, in one-letter code: Transmembrane protein 265 (108 aa).

Transmembrane regions (helical) follow at residues 34–54 (AATS…VFAI) and 78–98 (LILA…LLLW).

The protein belongs to the CD225/Dispanin family.

It is found in the membrane. The polypeptide is Transmembrane protein 265 (Homo sapiens (Human)).